Here is a 391-residue protein sequence, read N- to C-terminus: Transposase for insertion sequence element IS905 (391 aa).

The protein belongs to the transposase mutator family.

In terms of biological role, required for the transposition of the insertion element. The polypeptide is Transposase for insertion sequence element IS905 (tra905) (Lactococcus lactis subsp. lactis (strain IL1403) (Streptococcus lactis)).